The primary structure comprises 345 residues: Selenide, water dikinase (345 aa).

The active site involves Cys-15. ATP is bound by residues Lys-18 and Ser-46–Asp-48. Asp-49 contacts Mg(2+). Residues Asp-66, Asp-89, and Gly-137–Ser-139 each bind ATP. Residue Asp-89 coordinates Mg(2+). Asp-225 provides a ligand contact to Mg(2+).

Belongs to the selenophosphate synthase 1 family. Class I subfamily. Homodimer. It depends on Mg(2+) as a cofactor.

The enzyme catalyses hydrogenselenide + ATP + H2O = selenophosphate + AMP + phosphate + 2 H(+). In terms of biological role, synthesizes selenophosphate from selenide and ATP. In Aeromonas hydrophila subsp. hydrophila (strain ATCC 7966 / DSM 30187 / BCRC 13018 / CCUG 14551 / JCM 1027 / KCTC 2358 / NCIMB 9240 / NCTC 8049), this protein is Selenide, water dikinase.